A 204-amino-acid chain; its full sequence is 3-isopropylmalate dehydratase small subunit (204 aa).

It belongs to the LeuD family. LeuD type 1 subfamily. As to quaternary structure, heterodimer of LeuC and LeuD.

The enzyme catalyses (2R,3S)-3-isopropylmalate = (2S)-2-isopropylmalate. The protein operates within amino-acid biosynthesis; L-leucine biosynthesis; L-leucine from 3-methyl-2-oxobutanoate: step 2/4. Its function is as follows. Catalyzes the isomerization between 2-isopropylmalate and 3-isopropylmalate, via the formation of 2-isopropylmaleate. In Roseiflexus castenholzii (strain DSM 13941 / HLO8), this protein is 3-isopropylmalate dehydratase small subunit.